Reading from the N-terminus, the 757-residue chain is Tyrosine-protein kinase HTK16 (757 aa).

One can recognise an SH2 1 domain in the interval 10-102; it reads WYHGKITREV…GLPCKLVDFC (93 aa). ANK repeat units lie at residues 115–147, 151–180, 184–214, 219–248, and 252–281; these read GLDTRLHLACEEKNPNTVKELLQDSVIKENVNA, SGLTALHISCSNGDNDIVAMLLNAGADASA, NGRTPVQVVCFYNHASTLHLLISKGSADFLK, NGWVPLHEAAMRGSLECVKVLLSFNASMYP, and DGDTPRDLALQYENYNVVEFFDNYPVNQPK. Residues 287–379 form the SH2 2 domain; it reads WLHQNLDRNG…GLPTLLQFPV (93 aa). Disordered stretches follow at residues 381-407 and 444-467; these read SAENRKRPLPPTPTKNQLKLPVPPSRP and PKLPRPVVNHTEVPNSVNVGQKGD. Polar residues predominate over residues 455–467; it reads EVPNSVNVGQKGD. Residues 484–740 enclose the Protein kinase domain; that stretch reads ISFGKELGVG…PTFNELHSTF (257 aa). ATP is bound by residues 490 to 498 and Lys-516; that span reads LGVGEFGSV. The Proton acceptor role is filled by Asp-608. A Phosphotyrosine modification is found at Tyr-746.

It belongs to the protein kinase superfamily. Tyr protein kinase family. As to expression, epithelial cells.

The enzyme catalyses L-tyrosyl-[protein] + ATP = O-phospho-L-tyrosyl-[protein] + ADP + H(+). In terms of biological role, may be involved in signal transduction. The polypeptide is Tyrosine-protein kinase HTK16 (HTK16) (Hydra vulgaris (Hydra)).